Here is a 90-residue protein sequence, read N- to C-terminus: uncharacterized protein (90 aa).

The signal sequence occupies residues 1 to 18 (MSRALFAVVLAFPLIALA).

This is an uncharacterized protein from Escherichia coli (strain K12).